Reading from the N-terminus, the 204-residue chain is Cold and drought-regulated protein CORA (204 aa).

18 repeat units span residues Y54 to G59, Y65 to G70, Y71 to G76, Y78 to G83, Y85 to G90, H98 to G100, H101 to G103, H112 to G114, H115 to G117, H126 to G128, H129 to G131, Y164 to G169, Y171 to G176, H178 to G180, H181 to G183, H184 to G186, H187 to G189, and H190 to G192. Residues Y54–G176 form a 7 X 6 AA repeats of Y-N-H-G-G-G region. Residues H98–G192 are 11 X 3 AA repeats of H-G-G. Gly residues predominate over residues G169–G194. The interval G169–N204 is disordered.

This sequence belongs to the GRP family.

In terms of biological role, may be involved in resistance of the plant to environmental stress. The chain is Cold and drought-regulated protein CORA (CORA) from Medicago sativa (Alfalfa).